A 458-amino-acid polypeptide reads, in one-letter code: Elongation factor 1-alpha (458 aa).

Residue Gly-2 is modified to N,N,N-trimethylglycine. At Lys-3 the chain carries N6,N6-dimethyllysine; alternate. Lys-3 is subject to N6-methyllysine; alternate. Residues 5–240 (KTHVNVVVIG…DAIEPPVRPS (236 aa)) enclose the tr-type G domain. The interval 14 to 21 (GHVDSGKS) is G1. 14–21 (GHVDSGKS) serves as a coordination point for GTP. Residue Lys-30 is modified to N6-methyllysine. The tract at residues 70 to 74 (GITID) is G2. Lys-79 is modified (N6,N6,N6-trimethyllysine). The segment at 91 to 94 (DAPG) is G3. GTP contacts are provided by residues 91 to 95 (DAPGH) and 153 to 156 (NKMD). The segment at 153-156 (NKMD) is G4. Residues 192–194 (SGW) form a G5 region. Lys-316 is modified (N6,N6-dimethyllysine; alternate). The residue at position 316 (Lys-316) is an N6-methyllysine; alternate. Lys-390 bears the N6-methyllysine mark.

It belongs to the TRAFAC class translation factor GTPase superfamily. Classic translation factor GTPase family. EF-Tu/EF-1A subfamily.

It localises to the cytoplasm. In terms of biological role, this protein promotes the GTP-dependent binding of aminoacyl-tRNA to the A-site of ribosomes during protein biosynthesis. The protein is Elongation factor 1-alpha (TEF-2) of Mucor circinelloides f. lusitanicus (Mucor racemosus var. lusitanicus).